A 271-amino-acid chain; its full sequence is Putative hydro-lyase jk0403 (271 aa).

It belongs to the D-glutamate cyclase family.

This is Putative hydro-lyase jk0403 from Corynebacterium jeikeium (strain K411).